The sequence spans 356 residues: Methionine import ATP-binding protein MetN (356 aa).

The region spanning 7–250 is the ABC transporter domain; the sequence is IKLDNIDVTF…PRESLTQDFI (244 aa). 43–50 contacts ATP; sequence GYSGAGKS.

Belongs to the ABC transporter superfamily. Methionine importer (TC 3.A.1.24) family. The complex is composed of two ATP-binding proteins (MetN), two transmembrane proteins (MetI) and a solute-binding protein (MetQ).

The protein localises to the cell membrane. The catalysed reaction is L-methionine(out) + ATP + H2O = L-methionine(in) + ADP + phosphate + H(+). The enzyme catalyses D-methionine(out) + ATP + H2O = D-methionine(in) + ADP + phosphate + H(+). In terms of biological role, part of the ABC transporter complex MetNIQ involved in methionine import. Responsible for energy coupling to the transport system. The chain is Methionine import ATP-binding protein MetN from Streptococcus agalactiae serotype III (strain NEM316).